Here is a 268-residue protein sequence, read N- to C-terminus: Aliphatic sulfonates import ATP-binding protein SsuB (268 aa).

Positions 15 to 236 (LAVRNLQKTF…VRGSHRLAAL (222 aa)) constitute an ABC transporter domain. 47–54 (GRSGCGKS) contributes to the ATP binding site.

Belongs to the ABC transporter superfamily. Aliphatic sulfonates importer (TC 3.A.1.17.2) family. As to quaternary structure, the complex is composed of two ATP-binding proteins (SsuB), two transmembrane proteins (SsuC) and a solute-binding protein (SsuA).

Its subcellular location is the cell inner membrane. The catalysed reaction is ATP + H2O + aliphatic sulfonate-[sulfonate-binding protein]Side 1 = ADP + phosphate + aliphatic sulfonateSide 2 + [sulfonate-binding protein]Side 1.. Its function is as follows. Part of the ABC transporter complex SsuABC involved in aliphatic sulfonates import. Responsible for energy coupling to the transport system. The polypeptide is Aliphatic sulfonates import ATP-binding protein SsuB (Pseudomonas fluorescens (strain Pf0-1)).